The primary structure comprises 807 residues: MSKQDSLWFKSLRWLQRQLVHTVVVPHDPFDDLNLDPSKPLAYVMKTESVSDIAALSEMTAKLGLPSPYEELEVNGVKAPRVVCLEGSKPLFGQREGGEQYIDCFKRLLSVHKQNRELDIQLVPVSLYWGRTPGKEDDTMRAAVLERQNPTWLRKCLMILFLGRHNFVQFSNAVSLRYMADEHGTDKRIAQKLARVARVHFQRQRKVMTGPQLPKRQALFHALLKSDSITKAIKEEAASKKITEAEARAKAMEYLDEVAADYSDSLVRIAERFLTWLWNKLYKGINIKGAEQVRQLHHDGHEIVYVPCHRSHMDYLLLSYILYYQGMVPPHIAAGINLNFWPAGPAFRRGGAFFIRRSFGGNKLYTAVFREYLDQLFTKGYSVEYFTEGGRSRTGRLLAPKTGMLAMTLNSVLRGVERPVTLVPVYLGYDHVMEVATYHKELSGKKKKKESVWQVFGAIRKLGNFGQGYVNFGEPITLHNFLNEQAPSWREDIAKDPDQKPSWLTPVVNTLANRVMTNINDAAAVSSVTLTSMVLLASEQNALERSQLEKQLDLYLTILKEQPYTEYTSVPEGTGHDLVSQGLELKKLQIESDPLGDIISIDQSIAITMTYYRNNIIHLMVLPSLIAACLLRKENCSREDVICVVNDFYPLLEAELFMGIDDPAQYASQILDIFVAQGLVVEAEHFEVVESKINQLLLLSGTISETMQRYAILFNLLEVKPNMERSELEKDSHRLAQRLGALHGITAPEFYDKKLYATLSVKLKELGYLADNQGCSDIKRIKERANLLLRSSVRQTIVDSVHAEQNT.

The short motif at 308–313 is the HXXXXD motif element; that stretch reads CHRSHM.

The protein belongs to the GPAT/DAPAT family.

It is found in the cell inner membrane. It carries out the reaction sn-glycerol 3-phosphate + an acyl-CoA = a 1-acyl-sn-glycero-3-phosphate + CoA. It participates in phospholipid metabolism; CDP-diacylglycerol biosynthesis; CDP-diacylglycerol from sn-glycerol 3-phosphate: step 1/3. The protein is Glycerol-3-phosphate acyltransferase of Shewanella pealeana (strain ATCC 700345 / ANG-SQ1).